The chain runs to 404 residues: SAC3 domain-containing protein 1 (404 aa).

2 disordered regions span residues 1–58 and 77–117; these read MAGR…GTCP and RLEV…QLRP. Residues 12–21 are compositionally biased toward pro residues; that stretch reads PPRPAAPHPR. Basic and acidic residues predominate over residues 87–101; sequence DPPRADPQRAVKEYS. The PCI domain occupies 203–379; the sequence is QVQEGFGSLR…TCKVLVESKL (177 aa). S402 carries the post-translational modification Phosphoserine.

The protein belongs to the SAC3 family. As to quaternary structure, may be part of a SEM1-containing complex.

It localises to the cytoplasm. Its subcellular location is the cytoskeleton. It is found in the microtubule organizing center. The protein localises to the centrosome. The protein resides in the spindle. Involved in centrosome duplication and mitotic progression. The protein is SAC3 domain-containing protein 1 (SAC3D1) of Homo sapiens (Human).